The sequence spans 93 residues: SH3 domain-binding glutamic acid-rich-like protein 3 (93 aa).

The residue at position 2 (Ser2) is an N-acetylserine. The Glutaredoxin domain occupies Ser2 to Ala93. Thr9 is a glycosylation site (O-linked (GalNAc...) threonine).

The protein belongs to the SH3BGR family. As to quaternary structure, homodimer. Interacts with MYO1C (via its IQ motifs); the interaction is dependent on calcium and takes place at membrane ruffles. Post-translationally, may be glycosylated.

It is found in the cytoplasm. It localises to the cytosol. Its subcellular location is the cell projection. The protein resides in the ruffle membrane. The protein localises to the nucleus. Its function is as follows. Could act as a modulator of glutaredoxin biological activity. May play a role in cytoskeleton organization. The polypeptide is SH3 domain-binding glutamic acid-rich-like protein 3 (SH3BGRL3) (Bos taurus (Bovine)).